Reading from the N-terminus, the 226-residue chain is V-type proton ATPase subunit E (226 aa).

Belongs to the V-ATPase E subunit family. As to quaternary structure, V-ATPase is a heteromultimeric enzyme composed of a peripheral catalytic V1 complex (components A to H) attached to an integral membrane V0 proton pore complex (components: a, c, c', c'', d, e, f and VOA1).

It localises to the vacuole membrane. In terms of biological role, subunit of the V1 complex of vacuolar(H+)-ATPase (V-ATPase), a multisubunit enzyme composed of a peripheral complex (V1) that hydrolyzes ATP and a membrane integral complex (V0) that translocates protons. V-ATPase is responsible for acidifying and maintaining the pH of intracellular compartments. The chain is V-type proton ATPase subunit E (VMA4) from Candida albicans (Yeast).